Here is a 299-residue protein sequence, read N- to C-terminus: Protein bem46 (299 aa).

A helical membrane pass occupies residues 15–32; sequence YSGMASLAVTLIALGFLY.

Belongs to the serine esterase family.

The protein resides in the membrane. Suppressor of bem1/bud5. This is Protein bem46 (bem46) from Schizosaccharomyces pombe (strain 972 / ATCC 24843) (Fission yeast).